Consider the following 94-residue polypeptide: Large ribosomal subunit protein bL28 (94 aa).

Belongs to the bacterial ribosomal protein bL28 family.

The chain is Large ribosomal subunit protein bL28 from Maricaulis maris (strain MCS10) (Caulobacter maris).